The sequence spans 217 residues: MOB kinase activator 3A (217 aa).

Zn(2+) is bound by residues C83, C88, H165, and H170.

The protein belongs to the MOB1/phocein family.

In terms of biological role, may regulate the activity of kinases. This Bos taurus (Bovine) protein is MOB kinase activator 3A (MOB3A).